The following is a 384-amino-acid chain: Dual-specificity RNA methyltransferase RlmN (384 aa).

Catalysis depends on Glu105, which acts as the Proton acceptor. One can recognise a Radical SAM core domain in the interval 111–350 (EDDRATLCVS…TIVRKTRGDD (240 aa)). A disulfide bridge connects residues Cys118 and Cys355. Positions 125, 129, and 132 each coordinate [4Fe-4S] cluster. Residues 179–180 (GE), Ser211, 233–235 (SLH), and Asn312 contribute to the S-adenosyl-L-methionine site. The active-site S-methylcysteine intermediate is the Cys355.

Belongs to the radical SAM superfamily. RlmN family. The cofactor is [4Fe-4S] cluster.

Its subcellular location is the cytoplasm. It catalyses the reaction adenosine(2503) in 23S rRNA + 2 reduced [2Fe-2S]-[ferredoxin] + 2 S-adenosyl-L-methionine = 2-methyladenosine(2503) in 23S rRNA + 5'-deoxyadenosine + L-methionine + 2 oxidized [2Fe-2S]-[ferredoxin] + S-adenosyl-L-homocysteine. The enzyme catalyses adenosine(37) in tRNA + 2 reduced [2Fe-2S]-[ferredoxin] + 2 S-adenosyl-L-methionine = 2-methyladenosine(37) in tRNA + 5'-deoxyadenosine + L-methionine + 2 oxidized [2Fe-2S]-[ferredoxin] + S-adenosyl-L-homocysteine. Specifically methylates position 2 of adenine 2503 in 23S rRNA and position 2 of adenine 37 in tRNAs. m2A2503 modification seems to play a crucial role in the proofreading step occurring at the peptidyl transferase center and thus would serve to optimize ribosomal fidelity. This chain is Dual-specificity RNA methyltransferase RlmN, found in Escherichia fergusonii (strain ATCC 35469 / DSM 13698 / CCUG 18766 / IAM 14443 / JCM 21226 / LMG 7866 / NBRC 102419 / NCTC 12128 / CDC 0568-73).